The following is a 248-amino-acid chain: Small ribosomal subunit protein uS2 (248 aa).

The protein belongs to the universal ribosomal protein uS2 family.

This Cupriavidus necator (strain ATCC 17699 / DSM 428 / KCTC 22496 / NCIMB 10442 / H16 / Stanier 337) (Ralstonia eutropha) protein is Small ribosomal subunit protein uS2.